The primary structure comprises 183 residues: Adenine phosphoribosyltransferase (183 aa).

Belongs to the purine/pyrimidine phosphoribosyltransferase family. In terms of assembly, homodimer.

It localises to the cytoplasm. It carries out the reaction AMP + diphosphate = 5-phospho-alpha-D-ribose 1-diphosphate + adenine. Its pathway is purine metabolism; AMP biosynthesis via salvage pathway; AMP from adenine: step 1/1. Its function is as follows. Catalyzes a salvage reaction resulting in the formation of AMP, that is energically less costly than de novo synthesis. This Erwinia tasmaniensis (strain DSM 17950 / CFBP 7177 / CIP 109463 / NCPPB 4357 / Et1/99) protein is Adenine phosphoribosyltransferase.